A 287-amino-acid chain; its full sequence is MAATSTAAAASSIMGTRVVSDISSNSSRFTARFGFGTKKASPKKAKTVISDRPLWFPGAKSPEYLDGSLVGDYGFDPFGLGKPAEYLQFDLDSLDQNLAKNLYGEVIGTRTEAVDPKSTPFQPYSEVFGLQRFRECELIHGRWAMLATLGAITVEWLTGVTWQDAGKVELVDGSSYLGQPLPFSISTLIWIEVLVIGYIEFQRNAELDSEKRLYPGGKFFDPLGLASDPVKKAQLQLAEIKHARLAMVGFLGFAVQAAATGKGPLNNWATHLSDPLHTTIIDTFSSS.

The transit peptide at 1-31 directs the protein to the chloroplast; that stretch reads MAATSTAAAASSIMGTRVVSDISSNSSRFTA. Residue Arg32 is modified to N2-acetylarginine. Thr37 bears the Phosphothreonine mark. Trp55 serves as a coordination point for chlorophyll b. Phe75 lines the chlorophyll a pocket. Thr109 and Thr111 each carry phosphothreonine. Chlorophyll a is bound by residues Glu137 and His140. The chain crosses the membrane as a helical span at residues 143–163; it reads WAMLATLGAITVEWLTGVTWQ. Residue Leu177 participates in chlorophyll a binding. The chain crosses the membrane as a helical span at residues 181-201; the sequence is LPFSISTLIWIEVLVIGYIEF. Chlorophyll b contacts are provided by Glu200 and Arg203. 5 residues coordinate chlorophyll a: Glu239, His242, Arg244, Gln256, and His271. A helical transmembrane segment spans residues 245 to 265; sequence LAMVGFLGFAVQAAATGKGPL.

This sequence belongs to the light-harvesting chlorophyll a/b-binding (LHC) protein family. As to quaternary structure, the LHC complex consists of chlorophyll a-b binding proteins. It depends on Binds at least 14 chlorophylls (8 Chl-a and 6 Chl-b) and carotenoids such as lutein and neoxanthin. as a cofactor. Post-translationally, photoregulated by reversible phosphorylation of its threonine residues.

The protein resides in the plastid. Its subcellular location is the chloroplast thylakoid membrane. Its function is as follows. The light-harvesting complex (LHC) functions as a light receptor, it captures and delivers excitation energy to photosystems with which it is closely associated. The polypeptide is Chlorophyll a-b binding protein CP29.2, chloroplastic (LHCB4.2) (Arabidopsis thaliana (Mouse-ear cress)).